Here is a 300-residue protein sequence, read N- to C-terminus: Putative zinc finger protein 705EP (300 aa).

Positions 7–78 (VTFEDVAIDF…GREFLQDQNP (72 aa)) constitute a KRAB domain. The C2H2-type 1; degenerate zinc finger occupies 172-194 (YQCNLCEKAYTNCFHLRRPKMTH). C2H2-type zinc fingers lie at residues 200–222 (YTCHLCRKAFTQCSHLRRHEKTH) and 228–250 (YKCHQCGKAFIQSFNLRRHERTH). The segment at 256–278 (YECDNSGKAFSQSSGFRGNKIIH) adopts a C2H2-type 4; degenerate zinc-finger fold.

This sequence belongs to the krueppel C2H2-type zinc-finger protein family.

It is found in the nucleus. Its function is as follows. May be involved in transcriptional regulation. The polypeptide is Putative zinc finger protein 705EP (Homo sapiens (Human)).